Consider the following 250-residue polypeptide: 7-cyano-7-deazaguanine synthase (250 aa).

28–38 (LSGGLDSATCV) contacts ATP. Residues cysteine 213, cysteine 226, cysteine 229, and cysteine 232 each coordinate Zn(2+).

Belongs to the QueC family. The cofactor is Zn(2+).

The catalysed reaction is 7-carboxy-7-deazaguanine + NH4(+) + ATP = 7-cyano-7-deazaguanine + ADP + phosphate + H2O + H(+). The protein operates within purine metabolism; 7-cyano-7-deazaguanine biosynthesis. Its function is as follows. Catalyzes the ATP-dependent conversion of 7-carboxy-7-deazaguanine (CDG) to 7-cyano-7-deazaguanine (preQ(0)). The polypeptide is 7-cyano-7-deazaguanine synthase (Rhodopirellula baltica (strain DSM 10527 / NCIMB 13988 / SH1)).